A 130-amino-acid polypeptide reads, in one-letter code: Follitropin subunit beta (130 aa).

Positions 1-20 (MMKSIQLCILLWCLRAVCCH) are cleaved as a signal peptide. Intrachain disulfides connect cysteine 22-cysteine 70, cysteine 36-cysteine 85, cysteine 39-cysteine 123, cysteine 47-cysteine 101, cysteine 51-cysteine 103, and cysteine 106-cysteine 113. Asparagine 26 and asparagine 43 each carry an N-linked (GlcNAc...) asparagine glycan.

It belongs to the glycoprotein hormones subunit beta family. Heterodimer. The active follitropin is a heterodimer composed of an alpha chain/CGA shared with other hormones and a unique beta chain/FSHB shown here.

It is found in the secreted. In terms of biological role, together with the alpha chain CGA constitutes follitropin, the follicle-stimulating hormone, and provides its biological specificity to the hormone heterodimer. Binds FSHR, a G protein-coupled receptor, on target cells to activate downstream signaling pathways. Follitropin is involved in follicle development and spermatogenesis in reproductive organs. The chain is Follitropin subunit beta (Fshb) from Rattus norvegicus (Rat).